The sequence spans 295 residues: Bifunctional protein FolD (295 aa).

Residues 166-168 (GRS), Ser-191, and Ile-232 each bind NADP(+).

It belongs to the tetrahydrofolate dehydrogenase/cyclohydrolase family. As to quaternary structure, homodimer.

The enzyme catalyses (6R)-5,10-methylene-5,6,7,8-tetrahydrofolate + NADP(+) = (6R)-5,10-methenyltetrahydrofolate + NADPH. It catalyses the reaction (6R)-5,10-methenyltetrahydrofolate + H2O = (6R)-10-formyltetrahydrofolate + H(+). The protein operates within one-carbon metabolism; tetrahydrofolate interconversion. Its function is as follows. Catalyzes the oxidation of 5,10-methylenetetrahydrofolate to 5,10-methenyltetrahydrofolate and then the hydrolysis of 5,10-methenyltetrahydrofolate to 10-formyltetrahydrofolate. In Rhodopseudomonas palustris (strain BisB5), this protein is Bifunctional protein FolD.